Consider the following 268-residue polypeptide: Phosphatidylglycerol--prolipoprotein diacylglyceryl transferase (268 aa).

7 helical membrane-spanning segments follow: residues 14-34 (IIFS…LIGF), 60-80 (LLFN…VLFY), 95-115 (VWEG…AMLV), 124-144 (FWVV…MGRI), 176-196 (SQLY…NWFI), 203-223 (GSVA…VEFF), and 238-258 (ISMG…FIVL). R143 lines the a 1,2-diacyl-sn-glycero-3-phospho-(1'-sn-glycerol) pocket.

Belongs to the Lgt family.

It is found in the cell inner membrane. The catalysed reaction is L-cysteinyl-[prolipoprotein] + a 1,2-diacyl-sn-glycero-3-phospho-(1'-sn-glycerol) = an S-1,2-diacyl-sn-glyceryl-L-cysteinyl-[prolipoprotein] + sn-glycerol 1-phosphate + H(+). Its pathway is protein modification; lipoprotein biosynthesis (diacylglyceryl transfer). In terms of biological role, catalyzes the transfer of the diacylglyceryl group from phosphatidylglycerol to the sulfhydryl group of the N-terminal cysteine of a prolipoprotein, the first step in the formation of mature lipoproteins. The sequence is that of Phosphatidylglycerol--prolipoprotein diacylglyceryl transferase from Mannheimia succiniciproducens (strain KCTC 0769BP / MBEL55E).